Reading from the N-terminus, the 146-residue chain is Large ribosomal subunit protein uL15 (146 aa).

A compositionally biased stretch (basic and acidic residues) spans Met-1 to Arg-13. A disordered region spans residues Met-1–Glu-51. 2 stretches are compositionally biased toward gly residues: residues Thr-23–Gln-35 and Ser-42–Glu-51.

Belongs to the universal ribosomal protein uL15 family. In terms of assembly, part of the 50S ribosomal subunit.

Its function is as follows. Binds to the 23S rRNA. This Streptococcus pneumoniae serotype 2 (strain D39 / NCTC 7466) protein is Large ribosomal subunit protein uL15.